The following is a 757-amino-acid chain: MDVNPTLLFLKVPAQNAISTTFPYTGDPPYSHGTGTGYTMDTVNRTHQYSEKGKWTTNTETGAPQLNPIDGPLPEDNEPSGYAQTDCVLEAMAFLEESHPGIFENSCLETMEVVQQTRVDRLTQGRQTYDWTLNRNQPAATALANTIEVFRSNGLTANESGRLIDFLKDVMESMDKEEMEITTHFQRKRRVRDNMTKKMVTQRTIGKKKQRVNKRSYLIRALTLNTMTKDAERGKLKRRAIATPGMQIRGFVYFVETLARSICEKLEQSGLPVGGNEKKAKLANVVRKMMTNSQDTELSFTITGDNTKWNENQNPRMFLAMITYITKNQPEWFRNVLSIAPIMFSNKMARLGKGYMFESKSMKLRTQIPAEMLASIDLKYFNESTRKKIEKIRPLLIDGTASLSPGMMMGMFNMLSTVLGVSILNLGQKRYTKTTYWWDGLQSSDDFALIVNAPNHEGIQAGVDRFYRTCKLVGINMSKKKSYINRTGTFEFTSFFYRYGFVANFSMELPSFGVSGINESADMSIGVTVIKNNMINNDLGPATAQMALQLFIKDYRYTYRCHRGDTQIQTRRSFELKKLWEQTRSKAGLLVSDGGPNLYNIRNLHIPEVCLKWELMDEDYQGRLCNPLNPFVSHKEIESVNNAVVMPAHGPAKSMEYDAVATTHSWIPKRNRSILNTSQRGILEDEQMYQKCCNLFEKFFPSSSYRRPVGISSMVEAMVSRARIDARIDFESGRIKKEEFAEIMKTCSTIEELRRQK.

The tract at residues 50 to 82 is disordered; sequence SEKGKWTTNTETGAPQLNPIDGPLPEDNEPSGY. Residues 55 to 64 are compositionally biased toward polar residues; it reads WTTNTETGAP. 2 consecutive short sequence motifs (nuclear localization signal) follow at residues 187–195 and 203–216; these read RKRRVRDNM and RTIG…NKRS. Residues 249–256 are promoter-binding site; the sequence is RGFVYFVE. Residues 286–483 enclose the RdRp catalytic domain; sequence VRKMMTNSQD…GINMSKKKSY (198 aa).

This sequence belongs to the influenza viruses polymerase PB1 family. In terms of assembly, influenza RNA polymerase is composed of three subunits: PB1, PB2 and PA. Interacts (via N-terminus) with PA (via C-terminus). Interacts (via C-terminus) with PB2 (via N-terminus); this interaction is essential for transcription initiation. In terms of processing, phosphorylated by host PRKCA.

The protein localises to the host nucleus. Its subcellular location is the host cytoplasm. The catalysed reaction is RNA(n) + a ribonucleoside 5'-triphosphate = RNA(n+1) + diphosphate. In terms of biological role, RNA-dependent RNA polymerase which is responsible for replication and transcription of virus RNA segments. The transcription of viral mRNAs occurs by a unique mechanism called cap-snatching. 5' methylated caps of cellular mRNAs are cleaved after 10-13 nucleotides by PA. In turn, these short capped RNAs are used as primers by PB1 for transcription of viral mRNAs. During virus replication, PB1 initiates RNA synthesis and copy vRNA into complementary RNA (cRNA) which in turn serves as a template for the production of more vRNAs. In Aves (whales), this protein is RNA-directed RNA polymerase catalytic subunit.